Reading from the N-terminus, the 862-residue chain is MSRFFYGGGSDSESSSSDEEELYERDEEEQSEEEESSEEEETSEEGSDDEEGGVTGAARFMRDMSESEESEDEEKTTVVKSAKDKRLEELESTMKLIDNAKKINDWAVISTEFDKLNRQIVKITQAGPTPRVYIKGVADLEDFVNETVSKQKSGDKKLNASNAKGFNAVKQRIKKNNKDYANLIDKYRKNKEAFLEGKDEAAAPAAAAPRVAKLERVEAPVDVPVADDEGFATVGRGGKTLQYTPESILKHLRVIVESRGKKNTDRLEQIRTMEKLLEVAQNPYQRIRVYLTLISTRFDLTSTSSANYMAPEMWKSAEQDFSSLLSVLENNRDYVVTEGVDEWEDDEKQPQVAAGETLYIPGSVVSYAERLDDELTRSLQHIDPHTAEYIERLSDEKQLYTSLVRAQAYVEGLSKAEKSDPKQDSVNRVVMRRLEHVYFKPSQVITILEDATWKALPSELDSGVTPRGKTGDVENLVLTLCNYLFQYSDGIIRARAMLCQIYFLALHDQYYRARDLMLMSHLTENISNFDVSTQILFNRTLVQIGLCAFRAGLIYEAQNTLSEVCGSGRQKELLAQGIILQRYSTVSPEQERLERQRQLPFHMHINLELLECIYLTSSMFLEVPLMAQTSSSPELKRRVISKTFRRMLDYNERQVFTGPAENTRDGVIMSAKFLAAGDWKKAAEMLNSIKIWELMPQPEKIKEMLSQQIQEEGLRTYLFTYAPFYDSVSVATLASMFELSEKKISAIISRMISHEELAAALDQVNGAIVFRKGVELSRLQSQIVTLADKSMALLEGNEKTLEQRTQGMANAFQRDQGAGARGGRGGGRGGHARGGARFPGQQGRRPGGQQFGGGALGGAIKA.

Residues 1–10 (MSRFFYGGGS) show a composition bias toward gly residues. The tract at residues 1–81 (MSRFFYGGGS…DEEKTTVVKS (81 aa)) is disordered. A compositionally biased stretch (acidic residues) spans 16 to 52 (SSDEEELYERDEEEQSEEEESSEEEETSEEGSDDEEG). The 175-residue stretch at 601 to 775 (FHMHINLELL…GAIVFRKGVE (175 aa)) folds into the PCI domain. Residues 814-862 (RDQGAGARGGRGGGRGGHARGGARFPGQQGRRPGGQQFGGGALGGAIKA) form a disordered region. A compositionally biased stretch (gly residues) spans 819 to 833 (GARGGRGGGRGGHAR). Positions 835–844 (GARFPGQQGR) are enriched in low complexity. Positions 845-862 (RPGGQQFGGGALGGAIKA) are enriched in gly residues.

It belongs to the eIF-3 subunit C family. Component of the eukaryotic translation initiation factor 3 (eIF-3) complex.

It localises to the cytoplasm. Its function is as follows. Component of the eukaryotic translation initiation factor 3 (eIF-3) complex, which is involved in protein synthesis of a specialized repertoire of mRNAs and, together with other initiation factors, stimulates binding of mRNA and methionyl-tRNAi to the 40S ribosome. The eIF-3 complex specifically targets and initiates translation of a subset of mRNAs involved in cell proliferation. This chain is Eukaryotic translation initiation factor 3 subunit C (nip1), found in Aspergillus clavatus (strain ATCC 1007 / CBS 513.65 / DSM 816 / NCTC 3887 / NRRL 1 / QM 1276 / 107).